The sequence spans 210 residues: HTH-type transcriptional regulator TtgR (210 aa).

One can recognise an HTH tetR-type domain in the interval 10 to 70; the sequence is QETRAQIIEA…ALLDSLHETH (61 aa). The H-T-H motif DNA-binding region spans 33 to 52; sequence TLADIAELAGVTRGAIYWHF.

In terms of assembly, homodimer.

Its function is as follows. Represses expression from the ttgABC operon promoter and its own expression. Binds to a promoter region between the divergently transcribed ttgR and ttgABC genes/operons; in the presence of chloramphenicol or tetracycline this binding no longer occurs and ttgR and ttgABC are derepressed. This suggests that TtgR binds these antibiotics. This chain is HTH-type transcriptional regulator TtgR (ttgR), found in Pseudomonas putida (strain DOT-T1E).